A 434-amino-acid chain; its full sequence is O-phosphoseryl-tRNA(Sec) selenium transferase (434 aa).

The tetramerization stretch occupies residues 1-40 (MGLNITGLIPKHMENRGKLTLKENLKIIENILEQRKAPEN). Arg71 is a binding site for pyridoxal 5'-phosphate. The tract at residues 92–102 (GRSGNLIDPQP) is phosphate loop (P-loop). Residues Arg93, Ser94, and Gln101 each coordinate substrate. Residue Lys277 is modified to N6-(pyridoxal phosphate)lysine. Arg306 contacts substrate.

This sequence belongs to the SepSecS family. As to quaternary structure, homotetramer. Requires pyridoxal 5'-phosphate as cofactor.

It carries out the reaction O-phospho-L-seryl-tRNA(Sec) + selenophosphate + H2O = L-selenocysteinyl-tRNA(Sec) + 2 phosphate. It participates in aminoacyl-tRNA biosynthesis; selenocysteinyl-tRNA(Sec) biosynthesis; selenocysteinyl-tRNA(Sec) from L-seryl-tRNA(Sec) (archaeal/eukaryal route): step 2/2. Converts O-phosphoseryl-tRNA(Sec) to selenocysteinyl-tRNA(Sec) required for selenoprotein biosynthesis. This chain is O-phosphoseryl-tRNA(Sec) selenium transferase (spcS), found in Methanocaldococcus jannaschii (strain ATCC 43067 / DSM 2661 / JAL-1 / JCM 10045 / NBRC 100440) (Methanococcus jannaschii).